The sequence spans 138 residues: Small ribosomal subunit protein uS11c (138 aa).

Positions 1-23 are disordered; the sequence is MAKAIPRRSSRRNGRIGSRKSAR.

This sequence belongs to the universal ribosomal protein uS11 family. Part of the 30S ribosomal subunit.

The protein resides in the plastid. It is found in the chloroplast. The chain is Small ribosomal subunit protein uS11c from Ipomoea purpurea (Common morning glory).